The primary structure comprises 115 residues: Large ribosomal subunit protein bL19 (115 aa).

The protein belongs to the bacterial ribosomal protein bL19 family.

Its function is as follows. This protein is located at the 30S-50S ribosomal subunit interface and may play a role in the structure and function of the aminoacyl-tRNA binding site. This Lachnospira eligens (strain ATCC 27750 / DSM 3376 / VPI C15-48 / C15-B4) (Eubacterium eligens) protein is Large ribosomal subunit protein bL19.